The following is a 383-amino-acid chain: 8-amino-7-oxononanoate synthase (383 aa).

Residue arginine 22 coordinates substrate. 109 to 110 (GF) is a pyridoxal 5'-phosphate binding site. Histidine 134 contributes to the substrate binding site. The pyridoxal 5'-phosphate site is built by serine 178, histidine 206, and threonine 232. The residue at position 235 (lysine 235) is an N6-(pyridoxal phosphate)lysine. Threonine 348 contacts substrate.

This sequence belongs to the class-II pyridoxal-phosphate-dependent aminotransferase family. BioF subfamily. As to quaternary structure, homodimer. It depends on pyridoxal 5'-phosphate as a cofactor.

It catalyses the reaction 6-carboxyhexanoyl-[ACP] + L-alanine + H(+) = (8S)-8-amino-7-oxononanoate + holo-[ACP] + CO2. The protein operates within cofactor biosynthesis; biotin biosynthesis. Functionally, catalyzes the decarboxylative condensation of pimeloyl-[acyl-carrier protein] and L-alanine to produce 8-amino-7-oxononanoate (AON), [acyl-carrier protein], and carbon dioxide. The polypeptide is 8-amino-7-oxononanoate synthase (Vibrio campbellii (strain ATCC BAA-1116)).